Reading from the N-terminus, the 186-residue chain is Iodotyrosine deiodinase (186 aa).

FMN contacts are provided by residues 11–15 (RKTVR), 38–39 (PS), and S39. 3-iodo-L-tyrosine contacts are provided by M41, E68, Y72, and K92. M41, E68, Y72, and K92 together coordinate L-tyrosine. FMN is bound at residue R176.

It belongs to the nitroreductase family. Homodimer. FMN is required as a cofactor.

It catalyses the reaction 2 iodide + L-tyrosine + 2 NADP(+) = 3,5-diiodo-L-tyrosine + 2 NADPH + H(+). The enzyme catalyses iodide + L-tyrosine + NADP(+) = 3-iodo-L-tyrosine + NADPH. The catalysed reaction is 3-iodo-L-tyrosine + iodide + NADP(+) = 3,5-diiodo-L-tyrosine + NADPH + H(+). It carries out the reaction L-tyrosine + chloride + NADP(+) = 3-chloro-L-tyrosine + NADPH. It catalyses the reaction bromide + L-tyrosine + NADP(+) = 3-bromo-L-tyrosine + NADPH. Functionally, catalyzes the dehalogenation of halotyrosines such as 3-bromo-L-tyrosine, 3-chloro-L-tyrosine, 3-iodo-L-tyrosine and 3,5-diiodo-L-tyrosine. Activity towards 2-iodophenol is weak. This is Iodotyrosine deiodinase from Thermotoga neapolitana (strain ATCC 49049 / DSM 4359 / NBRC 107923 / NS-E).